A 283-amino-acid chain; its full sequence is ATP phosphoribosyltransferase (283 aa).

This sequence belongs to the ATP phosphoribosyltransferase family. Long subfamily. Mg(2+) is required as a cofactor.

It is found in the cytoplasm. The catalysed reaction is 1-(5-phospho-beta-D-ribosyl)-ATP + diphosphate = 5-phospho-alpha-D-ribose 1-diphosphate + ATP. The protein operates within amino-acid biosynthesis; L-histidine biosynthesis; L-histidine from 5-phospho-alpha-D-ribose 1-diphosphate: step 1/9. Its activity is regulated as follows. Feedback inhibited by histidine. Catalyzes the condensation of ATP and 5-phosphoribose 1-diphosphate to form N'-(5'-phosphoribosyl)-ATP (PR-ATP). Has a crucial role in the pathway because the rate of histidine biosynthesis seems to be controlled primarily by regulation of HisG enzymatic activity. This is ATP phosphoribosyltransferase from Bacteroides fragilis (strain ATCC 25285 / DSM 2151 / CCUG 4856 / JCM 11019 / LMG 10263 / NCTC 9343 / Onslow / VPI 2553 / EN-2).